A 302-amino-acid chain; its full sequence is N-acetylmuramic acid 6-phosphate etherase (302 aa).

Residues 57 to 220 enclose the SIS domain; it reads IADRFRSNGR…TTGAMIRIGK (164 aa). E85 (proton donor) is an active-site residue. E116 is an active-site residue.

The protein belongs to the GCKR-like family. MurNAc-6-P etherase subfamily. In terms of assembly, homodimer.

The catalysed reaction is N-acetyl-D-muramate 6-phosphate + H2O = N-acetyl-D-glucosamine 6-phosphate + (R)-lactate. It functions in the pathway amino-sugar metabolism; N-acetylmuramate degradation. In terms of biological role, specifically catalyzes the cleavage of the D-lactyl ether substituent of MurNAc 6-phosphate, producing GlcNAc 6-phosphate and D-lactate. The polypeptide is N-acetylmuramic acid 6-phosphate etherase (Rhodopirellula baltica (strain DSM 10527 / NCIMB 13988 / SH1)).